The following is a 356-amino-acid chain: Protein-arginine kinase (356 aa).

The region spanning 24–256 is the Phosphagen kinase C-terminal domain; that stretch reads IIISSRVRVA…RQILAQEQAA (233 aa). ATP is bound by residues 27–31, His93, Arg127, 178–182, and 209–214; these read SSRVR, RASVM, and RGLYGE. Positions 339–344 match the RDXXRA motif of the pArg binding pocket involved in allosteric regulation motif; that stretch reads RDIFRA.

This sequence belongs to the ATP:guanido phosphotransferase family.

The catalysed reaction is L-arginyl-[protein] + ATP = N(omega)-phospho-L-arginyl-[protein] + ADP + H(+). With respect to regulation, appears to be allosterically activated by the binding of pArg-containing polypeptides to the pArg-binding pocket localized in the C-terminal domain of McsB. Functionally, catalyzes the specific phosphorylation of arginine residues in proteins. This chain is Protein-arginine kinase, found in Pelotomaculum thermopropionicum (strain DSM 13744 / JCM 10971 / SI).